The following is a 900-amino-acid chain: Alanine--tRNA ligase (900 aa).

Positions 604, 608, 708, and 712 each coordinate Zn(2+).

It belongs to the class-II aminoacyl-tRNA synthetase family. Zn(2+) serves as cofactor.

It localises to the cytoplasm. The enzyme catalyses tRNA(Ala) + L-alanine + ATP = L-alanyl-tRNA(Ala) + AMP + diphosphate. Its function is as follows. Catalyzes the attachment of alanine to tRNA(Ala) in a two-step reaction: alanine is first activated by ATP to form Ala-AMP and then transferred to the acceptor end of tRNA(Ala). Also edits incorrectly charged Ser-tRNA(Ala) and Gly-tRNA(Ala) via its editing domain. The sequence is that of Alanine--tRNA ligase from Saccharolobus islandicus (strain M.14.25 / Kamchatka #1) (Sulfolobus islandicus).